The following is a 468-amino-acid chain: Malate-2H(+)/Na(+)-lactate antiporter (468 aa).

12 consecutive transmembrane segments (helical) span residues 9–29, 30–50, 73–93, 96–116, 136–156, 192–212, 233–253, 258–278, 309–329, 357–377, 405–425, and 428–448; these read LFEI…FTVF, LDLP…LLGI, AVLI…GGVV, LIYY…TLII, IAMI…AGAI, LYLS…VGFM, TFDI…LLAM, MPVI…FQGM, IVGM…GGLL, LIVA…LILT, LTSG…ILGV, and FSYL…IIYG.

Belongs to the NhaC Na(+)/H(+) (TC 2.A.35) antiporter family.

It localises to the cell membrane. In terms of biological role, couples proton uptake and Na(+) efflux to the substrate-product malate/lactate antiport, in an electroneutral malate-2H(+)/Na(+)-lactate exchange. Plays a role in supporting growth to high density on malate at reduced protonmotive force. This Bacillus subtilis (strain 168) protein is Malate-2H(+)/Na(+)-lactate antiporter (mleN).